A 602-amino-acid chain; its full sequence is Probable beta-glucosidase btgE (602 aa).

A signal peptide spans 1–18 (MRGAFLAAAAAVAGTAMA). 2 disordered regions span residues 61–94 (PPTL…SVVT) and 116–166 (GVDA…TSFS). Over residues 74–94 (PSSSSSSEVPSVPSSESSVVT) the composition is skewed to low complexity. The segment covering 152–166 (TSESPLPTPGVTSFS) has biased composition (polar residues). Glu-443 functions as the Proton donor in the catalytic mechanism. Catalysis depends on Glu-538, which acts as the Nucleophile.

It belongs to the glycosyl hydrolase 17 family.

The protein localises to the secreted. The protein resides in the cell wall. The catalysed reaction is Hydrolysis of terminal, non-reducing beta-D-glucosyl residues with release of beta-D-glucose.. It functions in the pathway glycan metabolism; cellulose degradation. Beta-glucosidases are one of a number of cellulolytic enzymes involved in the degradation of cellulosic biomass. Catalyzes the last step releasing glucose from the inhibitory cellobiose. The chain is Probable beta-glucosidase btgE (btgE) from Aspergillus flavus (strain ATCC 200026 / FGSC A1120 / IAM 13836 / NRRL 3357 / JCM 12722 / SRRC 167).